The following is a 224-amino-acid chain: Phosphoglycolate phosphatase (224 aa).

Asp-11 serves as the catalytic Nucleophile. Mg(2+) contacts are provided by Asp-11, Asp-13, and Asp-177.

Belongs to the HAD-like hydrolase superfamily. CbbY/CbbZ/Gph/YieH family. Mg(2+) is required as a cofactor.

The enzyme catalyses 2-phosphoglycolate + H2O = glycolate + phosphate. Its pathway is organic acid metabolism; glycolate biosynthesis; glycolate from 2-phosphoglycolate: step 1/1. Its function is as follows. Specifically catalyzes the dephosphorylation of 2-phosphoglycolate. Is involved in the dissimilation of the intracellular 2-phosphoglycolate formed during the DNA repair of 3'-phosphoglycolate ends, a major class of DNA lesions induced by oxidative stress. This is Phosphoglycolate phosphatase from Haemophilus influenzae (strain ATCC 51907 / DSM 11121 / KW20 / Rd).